A 676-amino-acid chain; its full sequence is Urocanate hydratase (676 aa).

Residues 15–35 form a disordered region; that stretch reads PLPENRGRQAGVPHAPVRTPS. NAD(+) contacts are provided by residues 126–127, Q204, 251–253, E271, 317–318, 343–347, 354–355, Y403, and G594; these read GG, GMS, NV, QTSCH, and YY.

It belongs to the urocanase family. NAD(+) is required as a cofactor.

The enzyme catalyses 4-imidazolone-5-propanoate = trans-urocanate + H2O. It participates in amino-acid degradation; L-histidine degradation into L-glutamate; N-formimidoyl-L-glutamate from L-histidine: step 2/3. This is Urocanate hydratase (UROC1) from Homo sapiens (Human).